The primary structure comprises 248 residues: Triosephosphate isomerase (248 aa).

Substrate is bound at residue 9–11; that stretch reads NWK. His94 acts as the Electrophile in catalysis. Glu166 functions as the Proton acceptor in the catalytic mechanism. Residues Gly172, Ser212, and 233–234 contribute to the substrate site; that span reads GG.

The protein belongs to the triosephosphate isomerase family. Homodimer.

It is found in the cytoplasm. It carries out the reaction D-glyceraldehyde 3-phosphate = dihydroxyacetone phosphate. It functions in the pathway carbohydrate biosynthesis; gluconeogenesis. Its pathway is carbohydrate degradation; glycolysis; D-glyceraldehyde 3-phosphate from glycerone phosphate: step 1/1. In terms of biological role, involved in the gluconeogenesis. Catalyzes stereospecifically the conversion of dihydroxyacetone phosphate (DHAP) to D-glyceraldehyde-3-phosphate (G3P). The protein is Triosephosphate isomerase of Caldanaerobacter subterraneus subsp. tengcongensis (strain DSM 15242 / JCM 11007 / NBRC 100824 / MB4) (Thermoanaerobacter tengcongensis).